Reading from the N-terminus, the 78-residue chain is Omega-conotoxin-like 2 (78 aa).

The signal sequence occupies residues 1–22 (MKLTCVVIVAVLLLTACQLITA). A propeptide spanning residues 23–42 (DDSRGTQKHRSLRSTTKVSK) is cleaved from the precursor. Cystine bridges form between Cys46/Cys62, Cys53/Cys65, and Cys61/Cys72.

It belongs to the conotoxin O1 superfamily. Expressed by the venom duct.

The protein localises to the secreted. Omega-conotoxins act at presynaptic membranes, they bind and block voltage-gated calcium channels (Cav). This is Omega-conotoxin-like 2 from Conus striatus (Striated cone).